The primary structure comprises 179 residues: Large ribosomal subunit protein uL5 (179 aa).

This sequence belongs to the universal ribosomal protein uL5 family. As to quaternary structure, part of the 50S ribosomal subunit; part of the 5S rRNA/L5/L18/L25 subcomplex. Contacts the 5S rRNA and the P site tRNA. Forms a bridge to the 30S subunit in the 70S ribosome.

Functionally, this is one of the proteins that bind and probably mediate the attachment of the 5S RNA into the large ribosomal subunit, where it forms part of the central protuberance. In the 70S ribosome it contacts protein S13 of the 30S subunit (bridge B1b), connecting the 2 subunits; this bridge is implicated in subunit movement. Contacts the P site tRNA; the 5S rRNA and some of its associated proteins might help stabilize positioning of ribosome-bound tRNAs. The protein is Large ribosomal subunit protein uL5 of Haemophilus influenzae (strain 86-028NP).